The primary structure comprises 485 residues: MEKKSLLILGTASHVGKSSVVTAICRILSRNYRVAPFKAQNMSLNSWITKDGKEIGIAQAIQAKAAGTEPTADMNPVLLKPKGDCVSQVILLGEPYADKSAGQYYDSIEEMNGVLEGALERLWKEHDIIVMEGAGGAAEINLYERDVVNVGTARLTQAPIILVGDIERGGVFASLYGTVALLPEDVKKNVKGFIINKFRGDPEILKPGLKQLEEITGIPVLGVLPHFKLRIPSEDSVSLGDKEGAKNEKEVEIAVIRLPRISNFTDFEPLEGLVKVHYVDIDEDLGNPDAIMIPGTKNTINDLLDLRASGMDKKIQAFKGKIPIFGICGGYQMLGRTIFDSGVENGVEAEFEGLRLLDIGTKFGEYKKRTIQVTKKVNGYGPILKSIDGEDIKGYEIHMGVTDSNRTVFGDDGAIDEEGLVIGTYLHGLFDNENIRNALVRYLCEKKGLEYRPEEIISENDAYEELANRFEQNIDMEKLYEIAGI.

In terms of domain architecture, GATase cobBQ-type spans 250–435; it reads EVEIAVIRLP…LHGLFDNENI (186 aa). Cys-328 functions as the Nucleophile in the catalytic mechanism. His-427 is an active-site residue.

Belongs to the CobB/CobQ family. CobQ subfamily.

It functions in the pathway cofactor biosynthesis; adenosylcobalamin biosynthesis. Its function is as follows. Catalyzes amidations at positions B, D, E, and G on adenosylcobyrinic A,C-diamide. NH(2) groups are provided by glutamine, and one molecule of ATP is hydrogenolyzed for each amidation. In Methanosarcina acetivorans (strain ATCC 35395 / DSM 2834 / JCM 12185 / C2A), this protein is Probable cobyric acid synthase.